Consider the following 224-residue polypeptide: Pyridoxine/pyridoxamine 5'-phosphate oxidase (224 aa).

Residues 19–22 and K81 each bind substrate; that span reads RGEY. FMN is bound by residues 76 to 81, 91 to 92, K98, and Q120; these read RSVLCK and FT. The substrate site is built by Y138 and R142. FMN is bound by residues 155 to 156 and W201; that span reads QS. Residue 207-209 participates in substrate binding; the sequence is RMH. R211 contributes to the FMN binding site.

The protein belongs to the pyridoxamine 5'-phosphate oxidase family. In terms of assembly, homodimer. It depends on FMN as a cofactor.

It carries out the reaction pyridoxamine 5'-phosphate + O2 + H2O = pyridoxal 5'-phosphate + H2O2 + NH4(+). It catalyses the reaction pyridoxine 5'-phosphate + O2 = pyridoxal 5'-phosphate + H2O2. The protein operates within cofactor metabolism; pyridoxal 5'-phosphate salvage; pyridoxal 5'-phosphate from pyridoxamine 5'-phosphate: step 1/1. Its pathway is cofactor metabolism; pyridoxal 5'-phosphate salvage; pyridoxal 5'-phosphate from pyridoxine 5'-phosphate: step 1/1. Catalyzes the oxidation of either pyridoxine 5'-phosphate (PNP) or pyridoxamine 5'-phosphate (PMP) into pyridoxal 5'-phosphate (PLP). The chain is Pyridoxine/pyridoxamine 5'-phosphate oxidase from Mycobacterium bovis (strain ATCC BAA-935 / AF2122/97).